Reading from the N-terminus, the 127-residue chain is RutC family protein PYRAB12510 (127 aa).

Belongs to the RutC family.

The protein is RutC family protein PYRAB12510 of Pyrococcus abyssi (strain GE5 / Orsay).